The sequence spans 45 residues: Bomanin Short 1 (45 aa).

The signal sequence occupies residues 1–20; that stretch reads MKFFSVVTVFVLGLLAVANA. The propeptide at 21–27 is removed by a dipeptidylpeptidase; it reads VPLSPDP. The cysteines at positions 36 and 39 are disulfide-linked. At G43 the chain carries Glycine amide.

In terms of tissue distribution, hemolymph (at protein level).

The protein localises to the secreted. Functionally, secreted immune-induced peptide induced by Toll signaling. Has a role in resistance to bacterial and fungal infections. Has no activity against the fungus C.glabrata in vitro. In Drosophila melanogaster (Fruit fly), this protein is Bomanin Short 1.